The chain runs to 343 residues: GTPase Obg (343 aa).

Positions 1–159 (MKYIDEVKIQ…FELKLELRVL (159 aa)) constitute an Obg domain. Residues 160 to 334 (ADVGLLGLPN…LTYAIMGYLE (175 aa)) enclose the OBG-type G domain. GTP-binding positions include 166 to 173 (GLPNAGKS), 191 to 195 (FTTLY), 213 to 216 (DIPG), 284 to 287 (NKVD), and 315 to 317 (SAL). Residues S173 and T193 each coordinate Mg(2+).

The protein belongs to the TRAFAC class OBG-HflX-like GTPase superfamily. OBG GTPase family. As to quaternary structure, monomer. Mg(2+) is required as a cofactor.

It is found in the cytoplasm. Its function is as follows. An essential GTPase which binds GTP, GDP and possibly (p)ppGpp with moderate affinity, with high nucleotide exchange rates and a fairly low GTP hydrolysis rate. Plays a role in control of the cell cycle, stress response, ribosome biogenesis and in those bacteria that undergo differentiation, in morphogenesis control. The chain is GTPase Obg from Nitrosomonas eutropha (strain DSM 101675 / C91 / Nm57).